We begin with the raw amino-acid sequence, 333 residues long: F420-dependent glucose-6-phosphate dehydrogenase (333 aa).

Aspartate 37 serves as a coordination point for coenzyme F420-(gamma-Glu)n. The active-site Proton donor is histidine 38. Residues threonine 74 and 105-106 (SG) each bind coenzyme F420-(gamma-Glu)n. Glutamate 107 (proton acceptor) is an active-site residue. Residues asparagine 110, 174–175 (GG), and 177–178 (VV) each bind coenzyme F420-(gamma-Glu)n. Substrate-binding residues include threonine 192, lysine 195, lysine 256, and arginine 280.

Belongs to the F420-dependent glucose-6-phosphate dehydrogenase family. In terms of assembly, homodimer.

It catalyses the reaction oxidized coenzyme F420-(gamma-L-Glu)(n) + D-glucose 6-phosphate + H(+) = 6-phospho-D-glucono-1,5-lactone + reduced coenzyme F420-(gamma-L-Glu)(n). Its function is as follows. Catalyzes the coenzyme F420-dependent oxidation of glucose 6-phosphate (G6P) to 6-phosphogluconolactone. This chain is F420-dependent glucose-6-phosphate dehydrogenase, found in Amycolatopsis mediterranei (strain U-32).